The chain runs to 447 residues: Tubulin beta-2 chain (447 aa).

GTP is bound by residues Gln11, Glu69, Ser138, Gly142, Thr143, Gly144, Asn204, and Asn226. Residue Glu69 coordinates Mg(2+). Residues 426–447 (QDAGVDEEEEEYEDDAPLEEEV) form a disordered region. Over residues 429–447 (GVDEEEEEYEDDAPLEEEV) the composition is skewed to acidic residues.

This sequence belongs to the tubulin family. Dimer of alpha and beta chains. A typical microtubule is a hollow water-filled tube with an outer diameter of 25 nm and an inner diameter of 15 nM. Alpha-beta heterodimers associate head-to-tail to form protofilaments running lengthwise along the microtubule wall with the beta-tubulin subunit facing the microtubule plus end conferring a structural polarity. Microtubules usually have 13 protofilaments but different protofilament numbers can be found in some organisms and specialized cells. It depends on Mg(2+) as a cofactor.

Its subcellular location is the cytoplasm. The protein localises to the cytoskeleton. In terms of biological role, tubulin is the major constituent of microtubules, a cylinder consisting of laterally associated linear protofilaments composed of alpha- and beta-tubulin heterodimers. Microtubules grow by the addition of GTP-tubulin dimers to the microtubule end, where a stabilizing cap forms. Below the cap, tubulin dimers are in GDP-bound state, owing to GTPase activity of alpha-tubulin. The protein is Tubulin beta-2 chain (TUB2) of Colletotrichum graminicola (Maize anthracnose fungus).